Consider the following 268-residue polypeptide: Glucosamine-6-phosphate deaminase (268 aa).

Catalysis depends on D67, which acts as the Proton acceptor; for enolization step. N136 acts as the For ring-opening step in catalysis. Residue H138 is the Proton acceptor; for ring-opening step of the active site. Catalysis depends on E143, which acts as the For ring-opening step.

The protein belongs to the glucosamine/galactosamine-6-phosphate isomerase family. NagB subfamily. As to quaternary structure, homohexamer.

It carries out the reaction alpha-D-glucosamine 6-phosphate + H2O = beta-D-fructose 6-phosphate + NH4(+). Its pathway is amino-sugar metabolism; N-acetylneuraminate degradation; D-fructose 6-phosphate from N-acetylneuraminate: step 5/5. In terms of biological role, catalyzes the reversible isomerization-deamination of glucosamine 6-phosphate (GlcN6P) to form fructose 6-phosphate (Fru6P) and ammonium ion. The chain is Glucosamine-6-phosphate deaminase from Shewanella loihica (strain ATCC BAA-1088 / PV-4).